A 342-amino-acid polypeptide reads, in one-letter code: Phospho-N-acetylmuramoyl-pentapeptide-transferase (342 aa).

The next 10 membrane-spanning stretches (helical) occupy residues 8-28 (VAQP…VIAP), 58-78 (GIPS…TAIF), 86-106 (IWVI…DDYL), 116-136 (ISLE…LIFL), 152-172 (GLID…VGSS), 184-204 (LATL…HLSL), 213-233 (VVGA…LSFL), 242-262 (VFMG…MSVM), 267-287 (FIYA…MAQV), and 318-338 (IVTR…AAII).

It belongs to the glycosyltransferase 4 family. MraY subfamily. Mg(2+) serves as cofactor.

The protein resides in the cell inner membrane. The enzyme catalyses UDP-N-acetyl-alpha-D-muramoyl-L-alanyl-gamma-D-glutamyl-meso-2,6-diaminopimeloyl-D-alanyl-D-alanine + di-trans,octa-cis-undecaprenyl phosphate = di-trans,octa-cis-undecaprenyl diphospho-N-acetyl-alpha-D-muramoyl-L-alanyl-D-glutamyl-meso-2,6-diaminopimeloyl-D-alanyl-D-alanine + UMP. It functions in the pathway cell wall biogenesis; peptidoglycan biosynthesis. Catalyzes the initial step of the lipid cycle reactions in the biosynthesis of the cell wall peptidoglycan: transfers peptidoglycan precursor phospho-MurNAc-pentapeptide from UDP-MurNAc-pentapeptide onto the lipid carrier undecaprenyl phosphate, yielding undecaprenyl-pyrophosphoryl-MurNAc-pentapeptide, known as lipid I. The protein is Phospho-N-acetylmuramoyl-pentapeptide-transferase of Anaplasma marginale (strain Florida).